We begin with the raw amino-acid sequence, 288 residues long: Bifunctional protein FolD (288 aa).

NADP(+) is bound by residues 166–168 (GAS) and Ile232.

This sequence belongs to the tetrahydrofolate dehydrogenase/cyclohydrolase family. Homodimer.

The catalysed reaction is (6R)-5,10-methylene-5,6,7,8-tetrahydrofolate + NADP(+) = (6R)-5,10-methenyltetrahydrofolate + NADPH. It carries out the reaction (6R)-5,10-methenyltetrahydrofolate + H2O = (6R)-10-formyltetrahydrofolate + H(+). The protein operates within one-carbon metabolism; tetrahydrofolate interconversion. In terms of biological role, catalyzes the oxidation of 5,10-methylenetetrahydrofolate to 5,10-methenyltetrahydrofolate and then the hydrolysis of 5,10-methenyltetrahydrofolate to 10-formyltetrahydrofolate. This chain is Bifunctional protein FolD, found in Salmonella enteritidis PT4 (strain P125109).